The following is a 264-amino-acid chain: Glyceraldehyde-3-phosphate dehydrogenase (264 aa).

Positions 45 and 93 each coordinate NAD(+). D-glyceraldehyde 3-phosphate is bound by residues 123-125 (SCT) and threonine 154. Cysteine 124 functions as the Nucleophile in the catalytic mechanism. Position 155 (asparagine 155) interacts with NAD(+). D-glyceraldehyde 3-phosphate is bound by residues arginine 169, 182 to 183 (TG), and arginine 205. A disordered region spans residues 245-264 (GILGYTEDPXVSSDXKGNSH).

This sequence belongs to the glyceraldehyde-3-phosphate dehydrogenase family. As to quaternary structure, homotetramer.

The protein localises to the cytoplasm. The catalysed reaction is D-glyceraldehyde 3-phosphate + phosphate + NAD(+) = (2R)-3-phospho-glyceroyl phosphate + NADH + H(+). The protein operates within carbohydrate degradation; glycolysis; pyruvate from D-glyceraldehyde 3-phosphate: step 1/5. In terms of biological role, catalyzes the oxidative phosphorylation of glyceraldehyde 3-phosphate (G3P) to 1,3-bisphosphoglycerate (BPG) using the cofactor NAD. The first reaction step involves the formation of a hemiacetal intermediate between G3P and a cysteine residue, and this hemiacetal intermediate is then oxidized to a thioester, with concomitant reduction of NAD to NADH. The reduced NADH is then exchanged with the second NAD, and the thioester is attacked by a nucleophilic inorganic phosphate to produce BPG. In Borrelia hermsii, this protein is Glyceraldehyde-3-phosphate dehydrogenase (gap).